The primary structure comprises 351 residues: MGKLQDGIAIKRINDAITTFKNYKLGELEQGGSMAINTLSNVRAHVGLAWPAILRNCLIHTSSHLGFMKFMIDIATTWKVGAFTLLGSVGDEDPFTDVDLIYTKTCLHLGLKDNDFLQFPEEFAYEANSFLEAQSMNARVDMLTGVHNIEDKYVFRIESISKFLKAYYTASEDVAYLTGFIKPDGSKESILSAELLKAQVTSEVLRVRNLITTKIQQYINLYEDSQLPHFRRAALSYTQDWDVDGGVPAALPQPDTTDDESPVTKPGASAPTVSKGADQPEDEEIIHKKVDASKDAPPKAVSSGNVSARGIPAFLEDDMSEMDAPDGFHDYLTREHENNFDLAQLGLAPSV.

Disordered stretches follow at residues 245-281 and 288-307; these read GGVP…DQPE and KKVD…GNVS. The span at 288–297 shows a compositional bias: basic and acidic residues; it reads KKVDASKDAP.

This sequence belongs to the phytoreovirus minor outer capsid protein P9 family.

The protein localises to the virion. Its subcellular location is the host cytoplasm. Functionally, minor outer capsid protein. This Rice dwarf virus (RDV) protein is Minor outer capsid protein P9.